Consider the following 61-residue polypeptide: Metallothionein-1 (61 aa).

An N-acetylmethionine modification is found at Met-1. The beta stretch occupies residues Met-1–Cys-29. A divalent metal cation-binding residues include Cys-5, Cys-7, Cys-13, Cys-15, Cys-19, Cys-21, Cys-24, Cys-26, Cys-29, Cys-33, Cys-34, Cys-36, Cys-37, Cys-41, Cys-44, Cys-48, Cys-50, Cys-57, Cys-59, and Cys-60. The alpha stretch occupies residues Lys-30–Ala-61.

This sequence belongs to the metallothionein superfamily. Type 1 family.

In terms of biological role, metallothioneins have a high content of cysteine residues that bind various heavy metals; these proteins are transcriptionally regulated by both heavy metals and glucocorticoids. In Mus musculus (Mouse), this protein is Metallothionein-1 (Mt1).